A 443-amino-acid chain; its full sequence is Ribosomal protein uS12 methylthiotransferase RimO (443 aa).

Positions 1-114 constitute an MTTase N-terminal domain; it reads MGFVSLGCPK…VMQAVHTHLP (114 aa). Cys-8, Cys-44, Cys-73, Cys-145, Cys-149, and Cys-152 together coordinate [4Fe-4S] cluster. The region spanning 131–372 is the Radical SAM core domain; it reads LTPKHYAYLK…MEVAEEVSAR (242 aa). In terms of domain architecture, TRAM spans 375 to 443; that stretch reads QRKVGQTLRV…ADGHDLWGAV (69 aa).

It belongs to the methylthiotransferase family. RimO subfamily. [4Fe-4S] cluster is required as a cofactor.

Its subcellular location is the cytoplasm. It carries out the reaction L-aspartate(89)-[ribosomal protein uS12]-hydrogen + (sulfur carrier)-SH + AH2 + 2 S-adenosyl-L-methionine = 3-methylsulfanyl-L-aspartate(89)-[ribosomal protein uS12]-hydrogen + (sulfur carrier)-H + 5'-deoxyadenosine + L-methionine + A + S-adenosyl-L-homocysteine + 2 H(+). Functionally, catalyzes the methylthiolation of an aspartic acid residue of ribosomal protein uS12. The polypeptide is Ribosomal protein uS12 methylthiotransferase RimO (Cupriavidus necator (strain ATCC 17699 / DSM 428 / KCTC 22496 / NCIMB 10442 / H16 / Stanier 337) (Ralstonia eutropha)).